Here is a 286-residue protein sequence, read N- to C-terminus: ATP synthase gamma chain (286 aa).

This sequence belongs to the ATPase gamma chain family. In terms of assembly, F-type ATPases have 2 components, CF(1) - the catalytic core - and CF(0) - the membrane proton channel. CF(1) has five subunits: alpha(3), beta(3), gamma(1), delta(1), epsilon(1). CF(0) has three main subunits: a, b and c.

It localises to the cell inner membrane. Functionally, produces ATP from ADP in the presence of a proton gradient across the membrane. The gamma chain is believed to be important in regulating ATPase activity and the flow of protons through the CF(0) complex. The chain is ATP synthase gamma chain from Shewanella pealeana (strain ATCC 700345 / ANG-SQ1).